The primary structure comprises 268 residues: Tetraspanin-33 (268 aa).

At Met1–Tyr23 the chain is on the cytoplasmic side. Residues Leu24–Val44 traverse the membrane as a helical segment. At Tyr45–Pro63 the chain is on the extracellular side. A helical membrane pass occupies residues Ala64–Gly84. Over Ser85–Thr95 the chain is Cytoplasmic. Residues Phe96–Ile116 form a helical membrane-spanning segment. Residues Phe117 to Arg226 lie on the Extracellular side of the membrane. 4 disulfides stabilise this stretch: Cys155/Cys223, Cys156/Cys188, Cys172/Cys182, and Cys189/Cys202. N-linked (GlcNAc...) asparagine glycosylation is found at Asn171 and Asn176. The chain crosses the membrane as a helical span at residues Leu227–Ile247. Topologically, residues Pro248–Val268 are cytoplasmic.

Belongs to the tetraspanin (TM4SF) family. As to quaternary structure, homodimer; disulfide-linked.

It is found in the cell membrane. Its subcellular location is the cell junction. The protein localises to the adherens junction. The protein resides in the cytoplasm. Its function is as follows. Part of TspanC8 subgroup, composed of 6 members that interact with the transmembrane metalloprotease ADAM10. This interaction is required for ADAM10 exit from the endoplasmic reticulum and for enzymatic maturation and trafficking to the cell surface as well as substrate specificity. Different TspanC8/ADAM10 complexes have distinct substrates. The polypeptide is Tetraspanin-33 (tspan33) (Xenopus laevis (African clawed frog)).